A 142-amino-acid polypeptide reads, in one-letter code: ATP synthase epsilon chain (142 aa).

Belongs to the ATPase epsilon chain family. As to quaternary structure, F-type ATPases have 2 components, CF(1) - the catalytic core - and CF(0) - the membrane proton channel. CF(1) has five subunits: alpha(3), beta(3), gamma(1), delta(1), epsilon(1). CF(0) has three main subunits: a, b and c.

It localises to the cell inner membrane. Functionally, produces ATP from ADP in the presence of a proton gradient across the membrane. The chain is ATP synthase epsilon chain from Maridesulfovibrio salexigens (strain ATCC 14822 / DSM 2638 / NCIMB 8403 / VKM B-1763) (Desulfovibrio salexigens).